The sequence spans 457 residues: Argininosuccinate lyase (457 aa).

The protein belongs to the lyase 1 family. Argininosuccinate lyase subfamily.

The protein localises to the cytoplasm. It carries out the reaction 2-(N(omega)-L-arginino)succinate = fumarate + L-arginine. The protein operates within amino-acid biosynthesis; L-arginine biosynthesis; L-arginine from L-ornithine and carbamoyl phosphate: step 3/3. The polypeptide is Argininosuccinate lyase (Citrobacter koseri (strain ATCC BAA-895 / CDC 4225-83 / SGSC4696)).